The primary structure comprises 256 residues: Ciliary microtubule associated protein 1A (256 aa).

STPGR repeat units follow at residues 66-92 (PGPG…IYGR), 181-206 (PGPG…MTAR), and 217-242 (PGPG…FGIR). The interval 91–115 (GRPRDISSFRTPGPGSYSPERAGKS) is disordered.

The protein belongs to the CIMAP family.

Its subcellular location is the cytoplasm. It localises to the cytoskeleton. It is found in the flagellum axoneme. Functionally, outer dense fibers are filamentous structures located on the outside of the axoneme in the midpiece and principal piece of the mammalian sperm tail. May help to maintain the passive elastic structures and elastic recoil of the sperm tail. This Xenopus laevis (African clawed frog) protein is Ciliary microtubule associated protein 1A (cimap1a).